We begin with the raw amino-acid sequence, 230 residues long: Thiamine-triphosphatase (230 aa).

Residue alanine 2 is modified to N-acetylalanine. The region spanning 5 to 201 (LIEVERKFLP…AKLIVYLQRF (197 aa)) is the CYTH domain. 2 residues coordinate Mg(2+): glutamate 7 and glutamate 9. 5 residues coordinate substrate: lysine 11, arginine 55, arginine 57, lysine 65, and arginine 125. Mg(2+)-binding residues include aspartate 145, glutamate 157, and glutamate 159. Glutamate 157 is a binding site for substrate. Lysine 193 contacts substrate.

This sequence belongs to the ThTPase family. As to quaternary structure, monomer. Requires Mg(2+) as cofactor.

The protein localises to the cytoplasm. It catalyses the reaction thiamine triphosphate + H2O = thiamine diphosphate + phosphate + H(+). In terms of biological role, hydrolase highly specific for thiamine triphosphate (ThTP). The polypeptide is Thiamine-triphosphatase (THTPA) (Macaca fascicularis (Crab-eating macaque)).